Here is a 55-residue protein sequence, read N- to C-terminus: uncharacterized protein (55 aa).

The signal sequence occupies residues 1–25 (MKFVKAIWPFVAVAIVFMFMSAFKF).

This is an uncharacterized protein from Bacillus subtilis (strain 168).